Here is a 1025-residue protein sequence, read N- to C-terminus: Rho GTPase-activating protein Graf (1025 aa).

One can recognise a PH domain in the interval 271–388 (IFTKRGYLFL…WISAMDGTEP (118 aa)). The Rho-GAP domain maps to 402 to 589 (YHLDEAGFMF…ILIDNYERIF (188 aa)). Residues 824–866 (GSASGPQQHPPVQRGLHSYGQTKHYSPLMPTSTSSSNDSVCDS) form a disordered region. Residues 854-866 (TSTSSSNDSVCDS) show a composition bias toward low complexity. The region spanning 963–1023 (TGTARVRTLY…PENYVEHLKP (61 aa)) is the SH3 domain.

In terms of assembly, interacts with Egfr (when ubiquitinated). In terms of tissue distribution, in the adult brain, expressed in the antennal lobe, the subesophageal ganglion and the alpha/beta neurons of the mushroom body.

Its subcellular location is the cytoplasm. The protein localises to the cytosol. The protein resides in the cytoplasmic vesicle. Functionally, GTPase-activating protein for Rho family proteins. Essential component of the CLIC (clathrin-independent carrier)/GEEC (GPI-anchored protein-enriched early endocytic compartment) endocytic pathway. During hematopoiesis, inhibits Egfr-ras-MAPK signaling by promoting Spi-induced Egfr internalization through CLIC/GEEC endocytosis, thereby preventing plasmatocyte overproliferation. Essential for normal mushroom body (MB) development and consequently the formation of olfactory long-term memories. During MD development, required to stop the MB beta-lobe from crossing the brain midline, possibly acting via its role in the CLIC/GEEC endocytic pathway to down-regulate the Egfr-ras-MAPK signaling at the tip of the beta-lobes. Required during embryo cellularization for maintaining and regulating the rate of actomyosin ring constriction. During cellularization, inhibits Rho-GTP levels at the furrow canal tip in a spatiotemporal manner, thus delaying the onset of actomyosin contraction and ensuring appropriate closure of the cells at the base of nuclei after membrane extension. In Drosophila melanogaster (Fruit fly), this protein is Rho GTPase-activating protein Graf.